The primary structure comprises 728 residues: Phosphoribosylformylglycinamidine synthase subunit PurL (728 aa).

His-42 is a catalytic residue. ATP-binding residues include Tyr-45 and Lys-84. Residue Glu-86 participates in Mg(2+) binding. Residues 87–90 (SHNH) and Arg-109 each bind substrate. Catalysis depends on His-88, which acts as the Proton acceptor. Asp-110 is a Mg(2+) binding site. Gln-237 is a substrate binding site. Asp-265 lines the Mg(2+) pocket. Residue 309-311 (ESQ) coordinates substrate. 2 residues coordinate ATP: Asp-491 and Gly-528. Asn-529 serves as a coordination point for Mg(2+). Ser-531 is a binding site for substrate.

This sequence belongs to the FGAMS family. In terms of assembly, monomer. Part of the FGAM synthase complex composed of 1 PurL, 1 PurQ and 2 PurS subunits.

The protein resides in the cytoplasm. The enzyme catalyses N(2)-formyl-N(1)-(5-phospho-beta-D-ribosyl)glycinamide + L-glutamine + ATP + H2O = 2-formamido-N(1)-(5-O-phospho-beta-D-ribosyl)acetamidine + L-glutamate + ADP + phosphate + H(+). It functions in the pathway purine metabolism; IMP biosynthesis via de novo pathway; 5-amino-1-(5-phospho-D-ribosyl)imidazole from N(2)-formyl-N(1)-(5-phospho-D-ribosyl)glycinamide: step 1/2. Part of the phosphoribosylformylglycinamidine synthase complex involved in the purines biosynthetic pathway. Catalyzes the ATP-dependent conversion of formylglycinamide ribonucleotide (FGAR) and glutamine to yield formylglycinamidine ribonucleotide (FGAM) and glutamate. The FGAM synthase complex is composed of three subunits. PurQ produces an ammonia molecule by converting glutamine to glutamate. PurL transfers the ammonia molecule to FGAR to form FGAM in an ATP-dependent manner. PurS interacts with PurQ and PurL and is thought to assist in the transfer of the ammonia molecule from PurQ to PurL. This is Phosphoribosylformylglycinamidine synthase subunit PurL from Campylobacter jejuni subsp. doylei (strain ATCC BAA-1458 / RM4099 / 269.97).